A 397-amino-acid polypeptide reads, in one-letter code: Elongation factor Tu (397 aa).

Residues 10–206 enclose the tr-type G domain; that stretch reads KPHVNIGTIG…AVDSYIPTPE (197 aa). Positions 19–26 are G1; that stretch reads GHVDHGKT. GTP is bound at residue 19–26; the sequence is GHVDHGKT. Thr26 provides a ligand contact to Mg(2+). A G2 region spans residues 60–64; it reads GITIN. The tract at residues 81–84 is G3; the sequence is DCPG. GTP-binding positions include 81 to 85 and 136 to 139; these read DCPGH and NKAD. Residues 136–139 are G4; the sequence is NKAD. Residues 174 to 176 are G5; that stretch reads SAL.

This sequence belongs to the TRAFAC class translation factor GTPase superfamily. Classic translation factor GTPase family. EF-Tu/EF-1A subfamily. As to quaternary structure, monomer.

It localises to the cytoplasm. The enzyme catalyses GTP + H2O = GDP + phosphate + H(+). Functionally, GTP hydrolase that promotes the GTP-dependent binding of aminoacyl-tRNA to the A-site of ribosomes during protein biosynthesis. The polypeptide is Elongation factor Tu (Clostridium beijerinckii (strain ATCC 51743 / NCIMB 8052) (Clostridium acetobutylicum)).